A 138-amino-acid chain; its full sequence is Large-conductance mechanosensitive channel (138 aa).

The next 3 helical transmembrane spans lie at V15–V35, I38–Q58, and G80–V100.

The protein belongs to the MscL family. As to quaternary structure, homopentamer.

The protein resides in the cell inner membrane. Channel that opens in response to stretch forces in the membrane lipid bilayer. May participate in the regulation of osmotic pressure changes within the cell. The protein is Large-conductance mechanosensitive channel of Bartonella bacilliformis (strain ATCC 35685 / KC583 / Herrer 020/F12,63).